Reading from the N-terminus, the 1413-residue chain is DNA-directed RNA polymerase subunit beta' (1413 aa).

Positions 72, 74, 87, and 90 each coordinate Zn(2+). Mg(2+) is bound by residues aspartate 463, aspartate 465, and aspartate 467. Zn(2+) contacts are provided by cysteine 811, cysteine 885, cysteine 892, and cysteine 895.

The protein belongs to the RNA polymerase beta' chain family. The RNAP catalytic core consists of 2 alpha, 1 beta, 1 beta' and 1 omega subunit. When a sigma factor is associated with the core the holoenzyme is formed, which can initiate transcription. It depends on Mg(2+) as a cofactor. Zn(2+) is required as a cofactor.

It carries out the reaction RNA(n) + a ribonucleoside 5'-triphosphate = RNA(n+1) + diphosphate. DNA-dependent RNA polymerase catalyzes the transcription of DNA into RNA using the four ribonucleoside triphosphates as substrates. In Ruegeria pomeroyi (strain ATCC 700808 / DSM 15171 / DSS-3) (Silicibacter pomeroyi), this protein is DNA-directed RNA polymerase subunit beta'.